The sequence spans 517 residues: MASRGGNQSSDRQREHTPERGMGSASHPPPRPDRSPSQSPPPLPPKRNTYRRVGSNSSIESQVVLVSETSRSSLSPERSNSPPPIPPKKKPRKTKHVPLQDISQDSEEEREQVQLVRVGFSYPPVRIIEKDGKRSVEKIDNNDPISKGATSIAVRNPLSLPLVSAWEKGMEVMAVLMERYRLDNDLRTSFKLMPEQHEQYKRICHQYVNEEHRGIPLTFSSMKTLTAMMGRFMQGLVHSYSEIAHNNWECTGCALWAHGCTDYEGKVKCLHGTIMIQKDHIIEMDVASENGQRAMKENPDRAKITQNRWGRNVVQLANNDARCCVNDANCATNQFSSKSCGMFYTEGIKAQEAFKQYEAFMKAVYPGITPDQARMMLIPIHCDCNHKPGCAPVMGRQTCKMTPFGMANAEDLDVATISDPTVLASVRHPALMVFQCCNPVYRNSRVQNAGPNCDFKISAPDLLGALQLTRKLWQDTFPEIPVPKLVIPEFKWQNRLQFRNVSLPAGHYDSRQNPFDF.

The segment covering 1-10 has biased composition (polar residues); sequence MASRGGNQSS. Positions 1–110 are disordered; the sequence is MASRGGNQSS…DISQDSEEER (110 aa). Over residues 64-80 the composition is skewed to low complexity; that stretch reads VLVSETSRSSLSPERSN. Basic residues predominate over residues 87-96; it reads PKKKPRKTKH. Y180 is subject to Phosphotyrosine; by host. Zn(2+)-binding residues include C269 and H271. Positions 282–316 are flexible loop; sequence IEMDVASENGQRAMKENPDRAKITQNRWGRNVVQL. Zn(2+) contacts are provided by C324, C340, C382, C384, C436, and C453. Residues 501-517 are C-terminal arm, DBP binding; sequence VSLPAGHYDSRQNPFDF.

Belongs to the adenoviridae E2A DNA-binding protein family. In terms of assembly, homomultimerizes on viral ssDNA bound to pTP. Forms a initiation complex with viral polymerase, pTP and hosts NFIA and POU2F1/OCT1. Interacts with host SRCAP.

It is found in the host nucleus. Functionally, plays a role in the elongation phase of viral strand displacement replication by unwinding the template in an ATP-independent fashion, employing its capacity to form multimers. Also enhances the rate of initiation. Released from template upon second strand synthesis. Assembles in complex with viral pTP, viral pol, host NFIA and host POU2F1/OCT1 on viral origin of replication. Covers the whole ssDNA genome during synthesis. The complementary strand synthesis induces its relese from DNA template. May inhibit cellular transcription mediated by the interaction between host SRCAP and CBP. The protein is DNA-binding protein of Human adenovirus B serotype 7 (HAdV-7).